The chain runs to 371 residues: 3-dehydroquinate synthase (371 aa).

Residues 72-77 (DGEEHK), 106-110 (GVVGD), 130-131 (TT), Lys-143, Lys-152, and 170-173 (TLKT) contribute to the NAD(+) site. Zn(2+) is bound by residues Glu-185, His-248, and His-265.

The protein belongs to the sugar phosphate cyclases superfamily. Dehydroquinate synthase family. It depends on Co(2+) as a cofactor. Requires Zn(2+) as cofactor. NAD(+) is required as a cofactor.

It localises to the cytoplasm. It catalyses the reaction 7-phospho-2-dehydro-3-deoxy-D-arabino-heptonate = 3-dehydroquinate + phosphate. It participates in metabolic intermediate biosynthesis; chorismate biosynthesis; chorismate from D-erythrose 4-phosphate and phosphoenolpyruvate: step 2/7. Functionally, catalyzes the conversion of 3-deoxy-D-arabino-heptulosonate 7-phosphate (DAHP) to dehydroquinate (DHQ). The polypeptide is 3-dehydroquinate synthase (Pelotomaculum thermopropionicum (strain DSM 13744 / JCM 10971 / SI)).